Here is a 461-residue protein sequence, read N- to C-terminus: ATP synthase subunit beta (461 aa).

An ATP-binding site is contributed by 151 to 158; the sequence is GGAGVGKT.

This sequence belongs to the ATPase alpha/beta chains family. As to quaternary structure, F-type ATPases have 2 components, CF(1) - the catalytic core - and CF(0) - the membrane proton channel. CF(1) has five subunits: alpha(3), beta(3), gamma(1), delta(1), epsilon(1). CF(0) has three main subunits: a(1), b(2) and c(9-12). The alpha and beta chains form an alternating ring which encloses part of the gamma chain. CF(1) is attached to CF(0) by a central stalk formed by the gamma and epsilon chains, while a peripheral stalk is formed by the delta and b chains.

It localises to the cell inner membrane. The catalysed reaction is ATP + H2O + 4 H(+)(in) = ADP + phosphate + 5 H(+)(out). Its function is as follows. Produces ATP from ADP in the presence of a proton gradient across the membrane. The catalytic sites are hosted primarily by the beta subunits. The protein is ATP synthase subunit beta of Coxiella burnetii (strain Dugway 5J108-111).